The sequence spans 755 residues: Anaphase-promoting complex subunit 5 (755 aa).

Serine 195 carries the phosphoserine modification. TPR repeat units follow at residues glutamine 209–aspartate 249, phenylalanine 250–leucine 300, arginine 301–histidine 337, valine 338–serine 378, leucine 379–isoleucine 418, aspartate 419–phenylalanine 466, alanine 467–asparagine 500, serine 501–serine 540, isoleucine 541–valine 580, isoleucine 581–alanine 620, serine 621–lysine 660, glycine 661–glutamate 696, and alanine 697–leucine 736. A Phosphothreonine modification is found at threonine 232.

The protein belongs to the APC5 family. The mammalian APC/C is composed at least of 14 distinct subunits ANAPC1, ANAPC2, CDC27/APC3, ANAPC4, ANAPC5, CDC16/APC6, ANAPC7, CDC23/APC8, ANAPC10, ANAPC11, CDC26/APC12, ANAPC13, ANAPC15 and ANAPC16 that assemble into a complex of at least 19 chains with a combined molecular mass of around 1.2 MDa; APC/C interacts with FZR1 and FBXO5.

The protein localises to the nucleus. Its subcellular location is the cytoplasm. The protein resides in the cytoskeleton. It localises to the spindle. It participates in protein modification; protein ubiquitination. Functionally, component of the anaphase promoting complex/cyclosome (APC/C), a cell cycle-regulated E3 ubiquitin ligase that controls progression through mitosis and the G1 phase of the cell cycle. The APC/C complex acts by mediating ubiquitination and subsequent degradation of target proteins: it mainly mediates the formation of 'Lys-11'-linked polyubiquitin chains and, to a lower extent, the formation of 'Lys-48'- and 'Lys-63'-linked polyubiquitin chains. The APC/C complex catalyzes assembly of branched 'Lys-11'-/'Lys-48'-linked branched ubiquitin chains on target proteins. The protein is Anaphase-promoting complex subunit 5 (ANAPC5) of Homo sapiens (Human).